Reading from the N-terminus, the 404-residue chain is Cysteine desulfurase IscS (404 aa).

Residues 75–76 (AT), Asn155, Gln183, and 203–205 (TGH) each bind pyridoxal 5'-phosphate. Lys206 carries the N6-(pyridoxal phosphate)lysine modification. Thr243 provides a ligand contact to pyridoxal 5'-phosphate. Cys328 serves as the catalytic Cysteine persulfide intermediate. Cys328 serves as a coordination point for [2Fe-2S] cluster.

It belongs to the class-V pyridoxal-phosphate-dependent aminotransferase family. NifS/IscS subfamily. As to quaternary structure, homodimer. Forms a heterotetramer with IscU, interacts with other sulfur acceptors. Requires pyridoxal 5'-phosphate as cofactor.

It localises to the cytoplasm. The catalysed reaction is (sulfur carrier)-H + L-cysteine = (sulfur carrier)-SH + L-alanine. It functions in the pathway cofactor biosynthesis; iron-sulfur cluster biosynthesis. In terms of biological role, master enzyme that delivers sulfur to a number of partners involved in Fe-S cluster assembly, tRNA modification or cofactor biosynthesis. Catalyzes the removal of elemental sulfur atoms from cysteine to produce alanine. Functions as a sulfur delivery protein for Fe-S cluster synthesis onto IscU, an Fe-S scaffold assembly protein, as well as other S acceptor proteins. This chain is Cysteine desulfurase IscS, found in Enterobacter sp. (strain 638).